The following is a 311-amino-acid chain: 4-hydroxy-tetrahydrodipicolinate synthase (311 aa).

T51 provides a ligand contact to pyruvate. Catalysis depends on Y140, which acts as the Proton donor/acceptor. Catalysis depends on K168, which acts as the Schiff-base intermediate with substrate. I209 contacts pyruvate.

This sequence belongs to the DapA family. Homotetramer; dimer of dimers.

The protein localises to the cytoplasm. It catalyses the reaction L-aspartate 4-semialdehyde + pyruvate = (2S,4S)-4-hydroxy-2,3,4,5-tetrahydrodipicolinate + H2O + H(+). The protein operates within amino-acid biosynthesis; L-lysine biosynthesis via DAP pathway; (S)-tetrahydrodipicolinate from L-aspartate: step 3/4. In terms of biological role, catalyzes the condensation of (S)-aspartate-beta-semialdehyde [(S)-ASA] and pyruvate to 4-hydroxy-tetrahydrodipicolinate (HTPA). In Streptococcus pneumoniae (strain CGSP14), this protein is 4-hydroxy-tetrahydrodipicolinate synthase.